A 598-amino-acid chain; its full sequence is 2-succinyl-5-enolpyruvyl-6-hydroxy-3-cyclohexene-1-carboxylate synthase (598 aa).

This sequence belongs to the TPP enzyme family. MenD subfamily. In terms of assembly, homodimer. Mg(2+) serves as cofactor. The cofactor is Mn(2+). Requires thiamine diphosphate as cofactor.

The enzyme catalyses isochorismate + 2-oxoglutarate + H(+) = 5-enolpyruvoyl-6-hydroxy-2-succinyl-cyclohex-3-ene-1-carboxylate + CO2. It participates in quinol/quinone metabolism; 1,4-dihydroxy-2-naphthoate biosynthesis; 1,4-dihydroxy-2-naphthoate from chorismate: step 2/7. The protein operates within cofactor biosynthesis; phylloquinone biosynthesis. Functionally, catalyzes the thiamine diphosphate-dependent decarboxylation of 2-oxoglutarate and the subsequent addition of the resulting succinic semialdehyde-thiamine pyrophosphate anion to isochorismate to yield 2-succinyl-5-enolpyruvyl-6-hydroxy-3-cyclohexene-1-carboxylate (SEPHCHC). The chain is 2-succinyl-5-enolpyruvyl-6-hydroxy-3-cyclohexene-1-carboxylate synthase from Prochlorococcus marinus (strain NATL2A).